Here is a 230-residue protein sequence, read N- to C-terminus: MVRDTRNVDLEWGLELCKPEKVNKQNLFTNIIKPQKDKINIKTDKIKFFLDNLFTEFSKFHDSCYPDGRISTRSKLRWPLLIIWCILIVFAIDKNFEVKDFLSIWINESFINENRFYSEIWGPIAIYICLFVLLLLGLIYCSKIVVKAIPLISIVIAAVVVIIAVAMVKILYICHWLIYKILILAFGIKVKPLGDTLPTHNGETGSHSKATVGSDIEQIEFQNMPTPVKK.

3 helical membrane passes run 78 to 98 (WPLLIIWCILIVFAIDKNFEV), 120 to 140 (IWGPIAIYICLFVLLLLGLIY), and 148 to 168 (AIPLISIVIAAVVVIIAVAMV).

The protein belongs to the UPF0494 family.

The protein resides in the membrane. The chain is UPF0494 membrane protein PB2B2.14c from Schizosaccharomyces pombe (strain 972 / ATCC 24843) (Fission yeast).